A 553-amino-acid polypeptide reads, in one-letter code: Undecaprenyl phosphate-alpha-4-amino-4-deoxy-L-arabinose arabinosyl transferase (553 aa).

11 helical membrane-spanning segments follow: residues Ala6–Leu26, Phe89–Met109, Ile115–Tyr135, Phe180–Ile200, Ile208–Ile228, Ile258–Leu278, Asn293–Ala313, Leu317–Val337, Gly352–Val372, Trp386–Leu406, and Tyr410–Pro430.

Belongs to the glycosyltransferase 83 family.

It localises to the cell inner membrane. The catalysed reaction is 4-amino-4-deoxy-alpha-L-arabinopyranosyl di-trans,octa-cis-undecaprenyl phosphate + lipid IVA = lipid IIA + di-trans,octa-cis-undecaprenyl phosphate.. It functions in the pathway lipopolysaccharide metabolism; 4-amino-4-deoxy-beta-L-arabinose-lipid A biosynthesis. Catalyzes the transfer of the L-Ara4N moiety of the glycolipid undecaprenyl phosphate-alpha-L-Ara4N to lipid A. The modified arabinose is attached to lipid A and is required for resistance to polymyxin and cationic antimicrobial peptides. In Photorhabdus laumondii subsp. laumondii (strain DSM 15139 / CIP 105565 / TT01) (Photorhabdus luminescens subsp. laumondii), this protein is Undecaprenyl phosphate-alpha-4-amino-4-deoxy-L-arabinose arabinosyl transferase (arnT).